Reading from the N-terminus, the 204-residue chain is Protein DESIGUAL 4 (204 aa).

4 helical membrane passes run 13-33 (IITV…VAGF), 60-80 (FVLG…ANVI), 107-127 (CLFL…NGIW), and 143-163 (VFSI…IYYI). The tract at residues 177–204 (KPNKTKPSELKPIPTEPNEAEPNSTPNP) is disordered. N-linked (GlcNAc...) asparagine glycosylation occurs at Asn179.

It belongs to the DESIGUAL family. Only expressed in inflorescences.

Its subcellular location is the endoplasmic reticulum membrane. The chain is Protein DESIGUAL 4 from Arabidopsis thaliana (Mouse-ear cress).